Consider the following 351-residue polypeptide: Holliday junction branch migration complex subunit RuvB (351 aa).

The interval 1-182 is large ATPase domain (RuvB-L); that stretch reads MNDRLITPDA…FGIVQRLEYY (182 aa). Residues Ile-21, Arg-22, Gly-63, Lys-66, Thr-67, Thr-68, 129-131, Arg-172, Tyr-182, and Arg-219 contribute to the ATP site; that span reads EDF. A Mg(2+)-binding site is contributed by Thr-67. The tract at residues 183-253 is small ATPAse domain (RuvB-S); that stretch reads NVADLSGIVK…VAHAAMELLN (71 aa). A head domain (RuvB-H) region spans residues 256-351; it reads RNGFDEQDRR…QDAPPVGRER (96 aa). Residues Arg-292, Arg-311, and Arg-316 each contribute to the DNA site. Residues 328-351 form a disordered region; that stretch reads LNPPRQPDTSPDLFQDAPPVGRER.

The protein belongs to the RuvB family. In terms of assembly, homohexamer. Forms an RuvA(8)-RuvB(12)-Holliday junction (HJ) complex. HJ DNA is sandwiched between 2 RuvA tetramers; dsDNA enters through RuvA and exits via RuvB. An RuvB hexamer assembles on each DNA strand where it exits the tetramer. Each RuvB hexamer is contacted by two RuvA subunits (via domain III) on 2 adjacent RuvB subunits; this complex drives branch migration. In the full resolvosome a probable DNA-RuvA(4)-RuvB(12)-RuvC(2) complex forms which resolves the HJ.

The protein resides in the cytoplasm. The enzyme catalyses ATP + H2O = ADP + phosphate + H(+). Functionally, the RuvA-RuvB-RuvC complex processes Holliday junction (HJ) DNA during genetic recombination and DNA repair, while the RuvA-RuvB complex plays an important role in the rescue of blocked DNA replication forks via replication fork reversal (RFR). RuvA specifically binds to HJ cruciform DNA, conferring on it an open structure. The RuvB hexamer acts as an ATP-dependent pump, pulling dsDNA into and through the RuvAB complex. RuvB forms 2 homohexamers on either side of HJ DNA bound by 1 or 2 RuvA tetramers; 4 subunits per hexamer contact DNA at a time. Coordinated motions by a converter formed by DNA-disengaged RuvB subunits stimulates ATP hydrolysis and nucleotide exchange. Immobilization of the converter enables RuvB to convert the ATP-contained energy into a lever motion, pulling 2 nucleotides of DNA out of the RuvA tetramer per ATP hydrolyzed, thus driving DNA branch migration. The RuvB motors rotate together with the DNA substrate, which together with the progressing nucleotide cycle form the mechanistic basis for DNA recombination by continuous HJ branch migration. Branch migration allows RuvC to scan DNA until it finds its consensus sequence, where it cleaves and resolves cruciform DNA. This is Holliday junction branch migration complex subunit RuvB from Alkalilimnicola ehrlichii (strain ATCC BAA-1101 / DSM 17681 / MLHE-1).